The following is a 235-amino-acid chain: Proteasome subunit alpha (235 aa).

This sequence belongs to the peptidase T1A family. In terms of assembly, the 20S proteasome core is composed of 14 alpha and 14 beta subunits that assemble into four stacked heptameric rings, resulting in a barrel-shaped structure. The two inner rings, each composed of seven catalytic beta subunits, are sandwiched by two outer rings, each composed of seven alpha subunits. The catalytic chamber with the active sites is on the inside of the barrel. Has a gated structure, the ends of the cylinder being occluded by the N-termini of the alpha-subunits. Is capped by the proteasome-associated ATPase, ARC.

It is found in the cytoplasm. The protein operates within protein degradation; proteasomal Pup-dependent pathway. With respect to regulation, the formation of the proteasomal ATPase ARC-20S proteasome complex, likely via the docking of the C-termini of ARC into the intersubunit pockets in the alpha-rings, may trigger opening of the gate for substrate entry. Interconversion between the open-gate and close-gate conformations leads to a dynamic regulation of the 20S proteasome proteolysis activity. Component of the proteasome core, a large protease complex with broad specificity involved in protein degradation. In Arthrobacter sp. (strain FB24), this protein is Proteasome subunit alpha.